Consider the following 197-residue polypeptide: Inosine triphosphate pyrophosphatase (197 aa).

ITP is bound at residue 10–15 (TGNANK). Glu45 is a binding site for Mg(2+). ITP-binding positions include Lys58, 76–77 (DT), Lys93, 151–154 (FGWD), Lys175, and 180–181 (HR).

This sequence belongs to the HAM1 NTPase family. As to quaternary structure, homodimer. The cofactor is Mg(2+). Requires Mn(2+) as cofactor.

The protein localises to the cytoplasm. Its subcellular location is the nucleus. It catalyses the reaction ITP + H2O = IMP + diphosphate + H(+). The enzyme catalyses dITP + H2O = dIMP + diphosphate + H(+). It carries out the reaction XTP + H2O = XMP + diphosphate + H(+). The catalysed reaction is N(6)-hydroxy-dATP + H2O = N(6)-hydroxy-dAMP + diphosphate + H(+). Its function is as follows. Pyrophosphatase that hydrolyzes the non-canonical purine nucleotides inosine triphosphate (ITP), deoxyinosine triphosphate (dITP) as well as 2'-deoxy-N-6-hydroxylaminopurine triphosphate (dHAPTP) and 5-bromodeoxyuridine 5'-triphosphate (BrdUTP) to their respective monophosphate derivatives. Xanthosine 5'-triphosphate (XTP) is also a potential substrate. The enzyme does not distinguish between the deoxy- and ribose forms. Probably excludes non-canonical purines from RNA and DNA precursor pools, thus preventing their incorporation into RNA and DNA and avoiding chromosomal lesions. The polypeptide is Inosine triphosphate pyrophosphatase (Saccharomyces cerevisiae (strain ATCC 204508 / S288c) (Baker's yeast)).